Consider the following 177-residue polypeptide: Peptide deformylase (177 aa).

Positions 98 and 140 each coordinate Fe cation. Glu141 is an active-site residue. His144 lines the Fe cation pocket.

This sequence belongs to the polypeptide deformylase family. Fe(2+) is required as a cofactor.

It carries out the reaction N-terminal N-formyl-L-methionyl-[peptide] + H2O = N-terminal L-methionyl-[peptide] + formate. Its function is as follows. Removes the formyl group from the N-terminal Met of newly synthesized proteins. Requires at least a dipeptide for an efficient rate of reaction. N-terminal L-methionine is a prerequisite for activity but the enzyme has broad specificity at other positions. In Zymomonas mobilis subsp. mobilis (strain ATCC 31821 / ZM4 / CP4), this protein is Peptide deformylase.